The primary structure comprises 633 residues: MANLDMEQHSSENEEIKKKKHKKRARDEAKKLKQPAMEEEPDHEDGDAKENNALIDEEPKKKKKKKNKKRGDTDDGEDEAVAEEEPKKKKKKNKKLQQRGDTNDEEDEVIAEEEEPKKKKKKQRKDTEAKSEEEEVEDKEEEKKLEETSIMTNKTFESLSLSDNTYKSIKEMGFARMTQIQAKAIPPLMMGEDVLGAARTGSGKTLAFLIPAVELLYRVKFTPRNGTGVLVICPTRELAIQSYGVAKELLKYHSQTVGKVIGGEKRKTEAEILAKGVNLLVATPGRLLDHLENTNGFIFKNLKFLVMDEADRILEQNFEEDLKKILNLLPKTRQTSLFSATQSAKVEDLARVSLTSPVYIDVDEGRKEVTNEGLEQGYCVVPSAMRLLFLLTFLKRFQGKKKIMVFFSTCKSTKFHAELFRYIKFDCLEIRGGIDQNKRTPTFLQFIKAETGILLCTNVAARGLDFPHVDWIVQYDPPDNPTDYIHRVGRTARGEGAKGKALLVLTPQELKFIQYLKAAKIPVEEHEFEEKKLLDVKPFVENLISENYALKESAKEAYKTYISGYDSHSMKDVFNVHQLNLTEVATSFGFSDPPKVALKIDRGGYRSKREPVNKFKRGRGGGRPGGKSKFERY.

Positions M1–K17 are enriched in basic and acidic residues. Residues M1 to E147 are disordered. Residues A2–Q34 adopt a coiled-coil conformation. Composition is skewed to acidic residues over residues M37–D47 and D74–E83. A compositionally biased stretch (basic residues) spans K88–Q97. Acidic residues-rich tracts occupy residues N103–E114 and S131–E140. A coiled-coil region spans residues K117–N153. Residues K154–A182 carry the Q motif motif. A Helicase ATP-binding domain is found at I185–I360. A198–T205 serves as a coordination point for ATP. Positions D308–D311 match the DEAD box motif. The region spanning R386–L534 is the Helicase C-terminal domain. Residues K608–Y633 form a disordered region.

This sequence belongs to the DEAD box helicase family. DDX18/HAS1 subfamily.

The enzyme catalyses ATP + H2O = ADP + phosphate + H(+). The chain is DEAD-box ATP-dependent RNA helicase 27 (RH27) from Arabidopsis thaliana (Mouse-ear cress).